Reading from the N-terminus, the 485-residue chain is Glycogen synthase (485 aa).

Residue lysine 21 participates in ADP-alpha-D-glucose binding.

Belongs to the glycosyltransferase 1 family. Bacterial/plant glycogen synthase subfamily.

The catalysed reaction is [(1-&gt;4)-alpha-D-glucosyl](n) + ADP-alpha-D-glucose = [(1-&gt;4)-alpha-D-glucosyl](n+1) + ADP + H(+). It participates in glycan biosynthesis; glycogen biosynthesis. Its function is as follows. Synthesizes alpha-1,4-glucan chains using ADP-glucose. The sequence is that of Glycogen synthase from Pseudomonas syringae pv. syringae (strain B728a).